A 301-amino-acid polypeptide reads, in one-letter code: NAD kinase (301 aa).

Asp-84 serves as the catalytic Proton acceptor. NAD(+)-binding positions include 84–85 (DG), Arg-89, 158–159 (NE), Lys-169, Asn-188, 199–204 (TAYSFS), and Gln-258.

This sequence belongs to the NAD kinase family. The cofactor is a divalent metal cation.

The protein resides in the cytoplasm. The enzyme catalyses NAD(+) + ATP = ADP + NADP(+) + H(+). Involved in the regulation of the intracellular balance of NAD and NADP, and is a key enzyme in the biosynthesis of NADP. Catalyzes specifically the phosphorylation on 2'-hydroxyl of the adenosine moiety of NAD to yield NADP. This Tropheryma whipplei (strain Twist) (Whipple's bacillus) protein is NAD kinase.